Consider the following 485-residue polypeptide: Velvet complex subunit B (485 aa).

The Velvet domain maps to 33-459 (GRKHYSLEVV…GNQGQKLPLA (427 aa)). Positions 107 to 353 (VLHPSSVDRH…PPPPRHTYTR (247 aa)) are disordered. Polar residues-rich tracts occupy residues 134–155 (APQSRAPANQTPSGGSTPTLSQ), 234–243 (RSPSSSTSDH), 267–304 (SISSYSNSQVDPSVRNHSNSEGIENPGWSSSEATSPHS), and 326–341 (THSQMAPGTCSSQHVS).

It belongs to the velvet family. VelB subfamily. Component of the heterotrimeric velvet complex composed of laeA, veA and velB; VeA acting as a bridging protein between laeA and velB. Forms a heterodimeric complex with vosA; the formation of the velB-vosA complex is light-dependent.

The protein resides in the nucleus. The protein localises to the cytoplasm. Its function is as follows. Component of the velvet transcription factor complex that controls sexual/asexual developmental ratio in response to light, promoting sexual development in the darkness while stimulating asexual sporulation under illumination. The velvet complex acts as a global regulator for secondary metabolite gene expression. Component of the velB-VosA heterodimeric complex that plays a dual role in activating genes associated with spore maturation and repressing certain development-associated genes. The velB-VosA complex binds DNA through the DNA-binding domain of vosA that recognizes an 11-nucleotide consensus sequence 5'-CTGGCCGCGGC-3' consisting of two motifs in the promoters of key developmental regulatory genes. This chain is Velvet complex subunit B, found in Laccaria bicolor (strain S238N-H82 / ATCC MYA-4686) (Bicoloured deceiver).